The chain runs to 305 residues: MMNVAVTATPSSLLYSPLLLPSQGPNRRMQWKRNGKRRLGTKVAVSGVITAGFELKPPPYPLDALEPHMSRETLDYHWGKHHKTYVENLNKQILGTDLDALSLEEVVLLSYNKGNMLPAFNNAAQAWNHEFFWESIQPGGGGKPTGELLRLIERDFGSFEEFLERFKSAAASNFGSGWTWLAYKANRLDVANAVNPLPKEEDKKLVIVKTPNAVNPLVWDYSPLLTIDTWEHAYYLDFENRRAEYINTFMEKLVSWETVSTRLESAIARAVQREQEGTETEDEENPDDEVPEVYLDSDIDVSEVD.

The N-terminal 46 residues, 1 to 46 (MMNVAVTATPSSLLYSPLLLPSQGPNRRMQWKRNGKRRLGTKVAVS), are a transit peptide targeting the chloroplast. 4 residues coordinate Fe cation: histidine 77, histidine 129, aspartate 228, and histidine 232. The interval 270-305 (AVQREQEGTETEDEENPDDEVPEVYLDSDIDVSEVD) is disordered. A compositionally biased stretch (acidic residues) spans 277-305 (GTETEDEENPDDEVPEVYLDSDIDVSEVD).

This sequence belongs to the iron/manganese superoxide dismutase family. As to quaternary structure, heterodimer with FSD3. Interacts with MRL7 and PRDA1. It depends on Fe cation as a cofactor.

Its subcellular location is the plastid. The protein resides in the chloroplast thylakoid. It catalyses the reaction 2 superoxide + 2 H(+) = H2O2 + O2. With respect to regulation, activated by cpn20/cpn21 (in vitro). Destroys superoxide anion radicals which are normally produced within the cells and which are toxic to biological systems. Plays important role in chloroplast development, particularly in the maintenance of thylakoids membranes. Seems to act as a heterodimer with FSD3. This is Superoxide dismutase [Fe] 2, chloroplastic (FSD2) from Arabidopsis thaliana (Mouse-ear cress).